The sequence spans 494 residues: mRNA decay activator protein ZFP36L2 (494 aa).

S57 is subject to Phosphoserine. Residues G93 to L113 are disordered. A Phosphoserine modification is found at S125. The short motif at R153 to L158 is the RNA-binding element. C3H1-type zinc fingers lie at residues R153–H181 and K191–D219. The segment at Y170–R211 is RNA-binding. T238 bears the Phosphothreonine mark. 2 disordered regions span residues S257–C293 and Q397–D494. Residues P406–A415 are compositionally biased toward pro residues. 2 stretches are compositionally biased toward low complexity: residues T416–R435 and Y459–D478. Residues S490 and S492 each carry the phosphoserine; by RPS6KA1 modification.

In terms of assembly, associates with the cytoplasmic CCR4-NOT deadenylase to trigger ARE-containing mRNA deadenylation and decay processes. Interacts with CNOT7; this interaction is inhibited in response to phorbol 12-myristate 13-acetate (PMA) treatment in a p38 MAPK-dependent manner. Interacts with CNOT6L. Post-translationally, phosphorylated by RPS6KA1 at Ser-490 and Ser-492 upon phorbol 12-myristate 13-acetate (PMA) treatment; this phosphorylation results in dissociation of the CCR4-NOT-deadenylase complex and induces p38 MAPK-mediated stabilization of the low-density lipoprotein (LDL) receptor (LDLR) mRNA. Phosphorylation occurs during early preadipocyte differentiation. In terms of tissue distribution, expressed mainly in the basal epidermal layer, weakly in the suprabasal epidermal layers. Expressed in epidermal keratinocytes (at protein level). Expressed in oocytes.

It localises to the nucleus. The protein resides in the cytoplasm. Functionally, zinc-finger RNA-binding protein that destabilizes several cytoplasmic AU-rich element (ARE)-containing mRNA transcripts by promoting their poly(A) tail removal or deadenylation, and hence provide a mechanism for attenuating protein synthesis. Acts as a 3'-untranslated region (UTR) ARE mRNA-binding adapter protein to communicate signaling events to the mRNA decay machinery. Functions by recruiting the CCR4-NOT deadenylase complex and probably other components of the cytoplasmic RNA decay machinery to the bound ARE-containing mRNAs, and hence promotes ARE-mediated mRNA deadenylation and decay processes. Binds to 3'-UTR ARE of numerous mRNAs. Promotes ARE-containing mRNA decay of the low-density lipoprotein (LDL) receptor (LDLR) mRNA in response to phorbol 12-myristate 13-acetate (PMA) treatment in a p38 MAPK-dependent manner. Positively regulates early adipogenesis by promoting ARE-mediated mRNA decay of immediate early genes (IEGs). Plays a role in mature peripheral neuron integrity by promoting ARE-containing mRNA decay of the transcriptional repressor REST mRNA. Plays a role in ovulation and oocyte meiotic maturation by promoting ARE-mediated mRNA decay of the luteinizing hormone receptor LHCGR mRNA. Acts as a negative regulator of erythroid cell differentiation: promotes glucocorticoid-induced self-renewal of erythroid cells by binding mRNAs that are induced or highly expressed during terminal erythroid differentiation and promotes their degradation, preventing erythroid cell differentiation. In association with ZFP36L1 maintains quiescence on developing B lymphocytes by promoting ARE-mediated decay of several mRNAs encoding cell cycle regulators that help B cells progress through the cell cycle, and hence ensuring accurate variable-diversity-joining (VDJ) recombination process and functional immune cell formation. Together with ZFP36L1 is also necessary for thymocyte development and prevention of T-cell acute lymphoblastic leukemia (T-ALL) transformation by promoting ARE-mediated mRNA decay of the oncogenic transcription factor NOTCH1 mRNA. The protein is mRNA decay activator protein ZFP36L2 of Homo sapiens (Human).